The chain runs to 450 residues: Phosphoglucosamine mutase (450 aa).

Residue S101 is the Phosphoserine intermediate of the active site. Residues S101, D240, D242, and D244 each coordinate Mg(2+). S101 bears the Phosphoserine mark.

Belongs to the phosphohexose mutase family. Requires Mg(2+) as cofactor. Post-translationally, activated by phosphorylation.

The enzyme catalyses alpha-D-glucosamine 1-phosphate = D-glucosamine 6-phosphate. Catalyzes the conversion of glucosamine-6-phosphate to glucosamine-1-phosphate. This is Phosphoglucosamine mutase from Streptococcus pneumoniae serotype 19F (strain G54).